Here is a 325-residue protein sequence, read N- to C-terminus: Neisseria adhesin A (325 aa).

A signal peptide spans 1–23 (MKHFQSKVLTAAILAALSGSAMA). Residues 24–137 (DNPPPSTDEI…NTAAIGENKA (114 aa)) form a head domain region. The stretch at 86 to 135 (LKEVLAQHDQSLADLTGTVDENSEALVKTAEVVNDISADVKANTAAIGEN) forms a coiled coil. A coiled stalk domain region spans residues 139-231 (IAKKADQTAL…LASAEKSITE (93 aa)). The interval 232 to 270 (HGTRLNGLDRTVSDLRKETRQGLAEQAALSGLFQPYNVG) is outer membrane translocation of the passenger domain. The next 4 beta stranded transmembrane spans lie at 270–280 (GRFNVTAAVGG), 284–295 (ESAVAIGTGFRF), 302–308 (KAGVAVG), and 314–325 (SAAYHVGVNYEW). Residues 271 to 325 (RFNVTAAVGGYKSESAVAIGTGFRFTENFAAKAGVAVGTSSGSSAAYHVGVNYEW) are translocator domain.

Belongs to the autotransporter-2 (AT-2) (TC 1.B.40) family. Homotrimer.

The protein resides in the cell surface. The protein localises to the cell outer membrane. Functionally, an antigenic bacterial cell surface protein that adheres to and induces bacterial uptake by human epithelial cells. The chain is Neisseria adhesin A from Neisseria meningitidis serogroup B.